The sequence spans 1338 residues: MAQRILQLAAEGSPERLQEALQGLTEGELGDMVTRQALRGRETAALLKGIFKGSPCSQQSGVLRRLQVYKHCVSLVESGDLHVGKVSEIIGLLMLEARQLPGHALAELATLFVEVIKRGSLSNGKSLELFSTVLTALSNSKESLAYGKGELNGEEFKKQLINTLCSSKWDPQCVIHLANMFRDIPLSGEELQFVVEKVLRMFSKLDLQEIPPLVYQLLLLSAKGSKKTVLEGIISFFNQLDKRQKEEQRVPQSADLEVATVPLDQLRHVEGTVILHIVSAINLDQDIGEELIKHLKTEQQKDPGKALCPFSVSLLLSTAVKHRLQEQIFDFLKTSITRSCKDLQILQASKFLQDLCPQQYDVTAVILEVVKNSAFGWDHVTQGLVDLGFSLMESYEPKKSFGGKAAETNLGLSKMPAQQACKLGASILLETFKVHEPIRSDILEQVLNRVLTKAASPVSHFIDLLSNIVVSAPLVLQNSSSRVTETFDNLSFLPIDTVQGLLRAVQPLLKVSMSVRDSLILVLQKAIFSRQLDARKAAVAGFLLLLRNFKILGSLTSSQCSQAIGATQVQADVHACYNSAANEAFCLEILGSLRRCLSQQADVRLMLYEGFYDVLRRNSQLASSIMETLLSQIKQYYLPQQDLLPPLKLEGCIMAQGDQIFLQEPLAHLLCCIQHCLAWYKSTVHLCKGAEDEEEEEDVGFEQNFEEMLESVTRRMIKSELEDFELDKSADFSPSSGVGVKNNIYAIQVMGICEVLIEYNFKIGNFSKNKFEDVLGLFTCYNKLSEILKEKAGKNKSTLGNRIARSFLSMGFVSTLLTALFRDNAQSHEESLAVLRSSTEFMRYAVSVALQKVQQLEEMGQTDGPDGQNPEKMFQNLCKITRVLLWRYTSIPTAVEESGKKKGKSISLLCLEGLLRIFNTMQQLYAARIPQFLQALDITDGDAEEADINVTEKAAFQIRQFQRSLVNQLSSAEDDFNSKETQLLITILSTLSKLLDPGSQQFLQFLTWTVKICKENALEDLSCCKGLLTLLFSLHVLYKSPVSLLRELAQDIHACLGDIDQDVEIESRSHFAIVNVKTAAPTVCLLVLGQADKVLEEVDWLIKRLTILGSDTSEDSTQASNQTQALEKGVILQLGTLLTVFHELVQTALPAGSCVDSLLRSLSKTYAILTSLIKHYIQACRSTSNTVPGRLEKLVKLSGSHLTPQCYSFITYVQNIHSESLSFAEEKKKKKKEDETAVVSTVMAKVLRDTKPIPNLIFAIEQYEKFLIHLSKKSKVNLMQYMKLSTSRDFRINASMLDSVLQEQNTEDAENEPDNNQSGTAEQPDENQEPQKKRRRKK.

K525 participates in a covalent cross-link: Glycyl lysine isopeptide (Lys-Gly) (interchain with G-Cter in ubiquitin). Phosphoserine is present on residues S558 and S561. Position 567 is a phosphothreonine (T567).

Belongs to the Fanconi anemia group I protein family. Homodimer. Part of a FANCI-FANCD2 heterodimeric complex that binds and scans dsDNA for DNA damage. Interacts with FANCL. Interacts with MTMR15/FAN1. Interacts with POLN. Interacts with UBL5; the interaction promotes FANCI homodimerization. In terms of processing, monoubiquitinated by FANCL during S phase and upon genotoxic stress. Deubiquitinated by USP1 as cells enter G2/M, or once DNA repair is completed. Monoubiquitination requires the FANCA-FANCB-FANCC-FANCE-FANCF-FANCG-FANCM complex. Ubiquitination is required for binding to chromatin, DNA repair, and normal cell cycle progression. Monoubiquitination is stimulated by DNA-binding. Phosphorylated in response to DNA damage by ATM and/or ATR. Phosphorylation of FANCI promotes ubiquitination of FANCD2, which prevents DNA release from the FANCI-FANCD2 complex.

Plays an essential role in the repair of DNA double-strand breaks by homologous recombination and in the repair of interstrand DNA cross-links (ICLs) by promoting FANCD2 monoubiquitination by FANCL and participating in recruitment to DNA repair sites. The FANCI-FANCD2 complex binds and scans double-stranded DNA (dsDNA) for DNA damage; this complex stalls at DNA junctions between double-stranded DNA and single-stranded DNA. Participates in S phase and G2 phase checkpoint activation upon DNA damage. The sequence is that of Fanconi anemia group I protein from Gallus gallus (Chicken).